Consider the following 557-residue polypeptide: (-)-germacrene D synthase (557 aa).

The Mg(2+) site is built by aspartate 310, aspartate 314, and glutamate 462. The short motif at aspartate 310–aspartate 314 is the DDXXD motif element.

This sequence belongs to the terpene synthase family. Tpsa subfamily. The cofactor is Mg(2+). As to expression, expressed in flowers. Detected in stems, young leaves and tendrils.

The protein localises to the cytoplasm. It catalyses the reaction (2E,6E)-farnesyl diphosphate + H2O = (1E,4S,5E,7R)-germacra-1(10),5-dien-11-ol + diphosphate. The enzyme catalyses (2E,6E)-farnesyl diphosphate = (-)-germacrene D + diphosphate. It functions in the pathway secondary metabolite biosynthesis; terpenoid biosynthesis. Its function is as follows. Involved in the biosynthesis of germacrene D. Can use farnesyl diphosphate as substrate, but not geranyl diphosphate or geranylgeranyl diphosphate. Produces mainly (-)-germacrene D along with gamma-cadinene. The chain is (-)-germacrene D synthase from Vitis vinifera (Grape).